Consider the following 626-residue polypeptide: Ankyrin repeat domain-containing protein 13B (626 aa).

N-acetylmethionine is present on methionine 1. ANK repeat units follow at residues 47–76 (RGRT…DVGR) and 80–109 (SGWT…YQRV). Residues 442-474 (PVPSVRGSPSSETPSPGSDSSSVSSSSSTTSCR) are disordered. The segment covering 449–472 (SPSSETPSPGSDSSSVSSSSSTTS) has biased composition (low complexity). Positions 503-522 (DDDDLLQFAIQQSLLEAGSE) constitute a UIM 1 domain. 2 disordered regions span residues 534–590 (NSKP…DEQL) and 595–614 (ELSA…EEEE). The span at 554-573 (PPTPQRQPAPPASVPSPRPS) shows a compositional bias: pro residues. UIM domains are found at residues 585-604 (SYDE…QEER) and 610-626 (QEEE…LTEQ).

In terms of assembly, interacts with EGFR (ubiquitinated); the interaction is direct and may regulate EGFR internalization.

It is found in the cell membrane. It localises to the late endosome. The protein resides in the early endosome. In terms of biological role, ubiquitin-binding protein that specifically recognizes and binds 'Lys-63'-linked ubiquitin. Does not bind 'Lys-48'-linked ubiquitin. Positively regulates the internalization of ligand-activated EGFR by binding to the Ub moiety of ubiquitinated EGFR at the cell membrane. This Homo sapiens (Human) protein is Ankyrin repeat domain-containing protein 13B (ANKRD13B).